A 366-amino-acid chain; its full sequence is 2-aminoethylphosphonate--pyruvate transaminase (366 aa).

K194 carries the post-translational modification N6-(pyridoxal phosphate)lysine.

It belongs to the class-V pyridoxal-phosphate-dependent aminotransferase family. PhnW subfamily. Homodimer. Requires pyridoxal 5'-phosphate as cofactor.

It catalyses the reaction (2-aminoethyl)phosphonate + pyruvate = phosphonoacetaldehyde + L-alanine. Functionally, involved in phosphonate degradation. The protein is 2-aminoethylphosphonate--pyruvate transaminase of Lactiplantibacillus plantarum (strain ATCC BAA-793 / NCIMB 8826 / WCFS1) (Lactobacillus plantarum).